We begin with the raw amino-acid sequence, 136 residues long: Large-conductance mechanosensitive channel (136 aa).

2 helical membrane passes run 9 to 29 and 79 to 99; these read AFAS…GAAF and IQTI…VKAI.

It belongs to the MscL family. As to quaternary structure, homopentamer.

It is found in the cell inner membrane. In terms of biological role, channel that opens in response to stretch forces in the membrane lipid bilayer. May participate in the regulation of osmotic pressure changes within the cell. This chain is Large-conductance mechanosensitive channel, found in Shewanella baltica (strain OS223).